The primary structure comprises 271 residues: 3-methyl-2-oxobutanoate hydroxymethyltransferase (271 aa).

D53 and D92 together coordinate Mg(2+). 3-methyl-2-oxobutanoate-binding positions include 53-54 (DS), D92, and K120. E122 is a binding site for Mg(2+). The active-site Proton acceptor is E189.

Belongs to the PanB family. As to quaternary structure, homodecamer; pentamer of dimers. The cofactor is Mg(2+).

It localises to the cytoplasm. It carries out the reaction 3-methyl-2-oxobutanoate + (6R)-5,10-methylene-5,6,7,8-tetrahydrofolate + H2O = 2-dehydropantoate + (6S)-5,6,7,8-tetrahydrofolate. It functions in the pathway cofactor biosynthesis; (R)-pantothenate biosynthesis; (R)-pantoate from 3-methyl-2-oxobutanoate: step 1/2. In terms of biological role, catalyzes the reversible reaction in which hydroxymethyl group from 5,10-methylenetetrahydrofolate is transferred onto alpha-ketoisovalerate to form ketopantoate. This is 3-methyl-2-oxobutanoate hydroxymethyltransferase from Burkholderia thailandensis (strain ATCC 700388 / DSM 13276 / CCUG 48851 / CIP 106301 / E264).